Reading from the N-terminus, the 261-residue chain is Small ribosomal subunit protein uS2 (261 aa).

The interval 224 to 261 is disordered; sequence GKQGQDDSEDVEKEMADKAAAENDDEESIEEVVEKSED. Residues 245–254 are compositionally biased toward acidic residues; that stretch reads ENDDEESIEE.

It belongs to the universal ribosomal protein uS2 family.

The protein is Small ribosomal subunit protein uS2 of Lactobacillus gasseri (strain ATCC 33323 / DSM 20243 / BCRC 14619 / CIP 102991 / JCM 1131 / KCTC 3163 / NCIMB 11718 / NCTC 13722 / AM63).